We begin with the raw amino-acid sequence, 100 residues long: Replication restart protein PriB (100 aa).

An SSB domain is found at 1-100 (MTNRIELSGV…VLHADKISQI (100 aa)).

Belongs to the PriB family. As to quaternary structure, homodimer. Interacts with PriA and DnaT. Component of the replication restart primosome. Primosome assembly occurs via a 'hand-off' mechanism. PriA binds to replication forks, subsequently PriB then DnaT bind; DnaT then displaces ssDNA to generate the helicase loading substrate.

In terms of biological role, involved in the restart of stalled replication forks, which reloads the replicative helicase on sites other than the origin of replication; the PriA-PriB pathway is the major replication restart pathway. During primosome assembly it facilitates complex formation between PriA and DnaT on DNA; stabilizes PriA on DNA. Stimulates the DNA unwinding activity of PriA helicase. This Vibrio cholerae serotype O1 (strain ATCC 39315 / El Tor Inaba N16961) protein is Replication restart protein PriB.